A 1370-amino-acid chain; its full sequence is Major capsid protein (1370 aa).

This sequence belongs to the herpesviridae major capsid protein family. In terms of assembly, homomultimer. Makes the hexons and eleven out of twelve pentons. Interacts with triplex proteins 1/TRX1 and 2/TRX2; adjacent capsomers are linked together in groups of three by triplexes, heterotrimeric complexes composed of one molecule of TRX1 and two molecules of TRX2. Interacts with scaffold protein; this interaction allows efficient MCP transport to the host nucleus. Interacts with capsid vertex component 2/CVC2. Interacts with the small capsomere-interacting protein/SCP.

It is found in the virion. It localises to the host nucleus. In terms of biological role, self-assembles to form an icosahedral capsid with a T=16 symmetry, about 200 nm in diameter, and consisting of 150 hexons and 12 pentons (total of 162 capsomers). Hexons form the edges and faces of the capsid and are each composed of six MCP molecules. In contrast, one penton is found at each of the 12 vertices. Eleven of the pentons are MCP pentamers, while the last vertex is occupied by the portal complex. The capsid is surrounded by a layer of proteinaceous material designated the tegument which, in turn, is enclosed in an envelope of host cell-derived lipids containing virus-encoded glycoproteins. The polypeptide is Major capsid protein (Human cytomegalovirus (strain AD169) (HHV-5)).